We begin with the raw amino-acid sequence, 96 residues long: Large ribosomal subunit protein uL23 (96 aa).

The protein belongs to the universal ribosomal protein uL23 family. As to quaternary structure, part of the 50S ribosomal subunit. Contacts protein L29, and trigger factor when it is bound to the ribosome.

Functionally, one of the early assembly proteins it binds 23S rRNA. One of the proteins that surrounds the polypeptide exit tunnel on the outside of the ribosome. Forms the main docking site for trigger factor binding to the ribosome. The sequence is that of Large ribosomal subunit protein uL23 from Aster yellows witches'-broom phytoplasma (strain AYWB).